Reading from the N-terminus, the 131-residue chain is Ribosome-binding factor A (131 aa).

It belongs to the RbfA family. As to quaternary structure, monomer. Binds 30S ribosomal subunits, but not 50S ribosomal subunits or 70S ribosomes.

It localises to the cytoplasm. Its function is as follows. One of several proteins that assist in the late maturation steps of the functional core of the 30S ribosomal subunit. Associates with free 30S ribosomal subunits (but not with 30S subunits that are part of 70S ribosomes or polysomes). Required for efficient processing of 16S rRNA. May interact with the 5'-terminal helix region of 16S rRNA. The polypeptide is Ribosome-binding factor A (Pseudomonas fluorescens (strain SBW25)).